The following is a 179-amino-acid chain: Large ribosomal subunit protein uL6 (179 aa).

This sequence belongs to the universal ribosomal protein uL6 family. In terms of assembly, part of the 50S ribosomal subunit.

Functionally, this protein binds to the 23S rRNA, and is important in its secondary structure. It is located near the subunit interface in the base of the L7/L12 stalk, and near the tRNA binding site of the peptidyltransferase center. The protein is Large ribosomal subunit protein uL6 of Alkaliphilus oremlandii (strain OhILAs) (Clostridium oremlandii (strain OhILAs)).